The chain runs to 156 residues: 6,7-dimethyl-8-ribityllumazine synthase (156 aa).

5-amino-6-(D-ribitylamino)uracil contacts are provided by residues Phe-25, 59-61 (AFE), and 83-85 (AVI). Position 88–89 (88–89 (AT)) interacts with (2S)-2-hydroxy-3-oxobutyl phosphate. His-91 serves as the catalytic Proton donor. 5-amino-6-(D-ribitylamino)uracil is bound at residue Phe-116. Arg-130 is a binding site for (2S)-2-hydroxy-3-oxobutyl phosphate.

Belongs to the DMRL synthase family.

The catalysed reaction is (2S)-2-hydroxy-3-oxobutyl phosphate + 5-amino-6-(D-ribitylamino)uracil = 6,7-dimethyl-8-(1-D-ribityl)lumazine + phosphate + 2 H2O + H(+). It participates in cofactor biosynthesis; riboflavin biosynthesis; riboflavin from 2-hydroxy-3-oxobutyl phosphate and 5-amino-6-(D-ribitylamino)uracil: step 1/2. Its function is as follows. Catalyzes the formation of 6,7-dimethyl-8-ribityllumazine by condensation of 5-amino-6-(D-ribitylamino)uracil with 3,4-dihydroxy-2-butanone 4-phosphate. This is the penultimate step in the biosynthesis of riboflavin. The sequence is that of 6,7-dimethyl-8-ribityllumazine synthase from Nitratidesulfovibrio vulgaris (strain ATCC 29579 / DSM 644 / CCUG 34227 / NCIMB 8303 / VKM B-1760 / Hildenborough) (Desulfovibrio vulgaris).